Here is a 133-residue protein sequence, read N- to C-terminus: Urease subunit beta (133 aa).

The disordered stretch occupies residues valine 106 to lysine 133.

This sequence belongs to the urease beta subunit family. Heterotrimer of UreA (gamma), UreB (beta) and UreC (alpha) subunits. Three heterotrimers associate to form the active enzyme.

Its subcellular location is the cytoplasm. It catalyses the reaction urea + 2 H2O + H(+) = hydrogencarbonate + 2 NH4(+). Its pathway is nitrogen metabolism; urea degradation; CO(2) and NH(3) from urea (urease route): step 1/1. The sequence is that of Urease subunit beta from Staphylococcus epidermidis (strain ATCC 12228 / FDA PCI 1200).